A 162-amino-acid chain; its full sequence is uncharacterized protein (162 aa).

Residues 29 to 50 (CPFCDYTNADAKVVRKHVKSKH) form a C2H2-type zinc finger. A disordered region spans residues 60-93 (KLESQKSKNNGKKQTGQKKQGKGKKQPKRVRETC). The span at 68–87 (NNGKKQTGQKKQGKGKKQPK) shows a compositional bias: basic residues.

The protein to M.jannaschii MJECS06.

This is an uncharacterized protein from Methanocaldococcus jannaschii (strain ATCC 43067 / DSM 2661 / JAL-1 / JCM 10045 / NBRC 100440) (Methanococcus jannaschii).